A 414-amino-acid chain; its full sequence is Na(+)-translocating NADH-quinone reductase subunit B (414 aa).

A run of 3 helical transmembrane segments spans residues 56–76 (IMIM…YNAG), 129–149 (FLPI…LFCM), and 164–184 (ILFA…LGIT). Thr-236 is modified (FMN phosphoryl threonine). The next 5 helical transmembrane spans lie at 268-288 (IPGS…AMIV), 297-317 (IIAG…VIGS), 325-345 (MPWH…FMAT), 358-378 (WWYG…NPAY), and 381-401 (GMML…HVVI).

This sequence belongs to the NqrB/RnfD family. Composed of six subunits; NqrA, NqrB, NqrC, NqrD, NqrE and NqrF. The cofactor is FMN.

Its subcellular location is the cell inner membrane. It carries out the reaction a ubiquinone + n Na(+)(in) + NADH + H(+) = a ubiquinol + n Na(+)(out) + NAD(+). Its activity is regulated as follows. This reaction is tightly coupled to the Na(+) pumping activity and specifically requires Na(+) for activity. Inhibited by korormicin and 2-N-heptyl-4-hydroxyquinoline N-oxide (HQNO). Functionally, NQR complex catalyzes the reduction of ubiquinone-1 to ubiquinol by two successive reactions, coupled with the transport of Na(+) ions from the cytoplasm to the periplasm. NqrA to NqrE are probably involved in the second step, the conversion of ubisemiquinone to ubiquinol. The sequence is that of Na(+)-translocating NADH-quinone reductase subunit B from Vibrio alginolyticus.